The sequence spans 115 residues: Alpha-endosulfine (115 aa).

Residues 1–10 (MSSENLSDTQ) show a composition bias toward polar residues. Residues 1-27 (MSSENLSDTQMEYEDEKQDSQEKNANL) are disordered. A Phosphoserine; by GWL modification is found at Ser-65. Residues 77-115 (NKQLPVAGPDKNLVTGDHIPTPQDLPQRRSSLVTSKLAG) form a disordered region. Polar residues predominate over residues 104–115 (RRSSLVTSKLAG).

It belongs to the endosulfine family. Phosphorylation at Ser-65 by gwl during mitosis is essential for interaction with ppp2r2d (PR55-delta) and subsequent inactivation of PP2A.

It is found in the cytoplasm. Its function is as follows. Protein phosphatase inhibitor that specifically inhibits protein phosphatase 2A (PP2A) during mitosis. When phosphorylated at Ser-67 during mitosis, specifically interacts with ppp2r2d (PR55-delta) and inhibits its activity, leading to inactivation of PP2A, an essential condition to keep cyclin-B1-CDK1 activity high during M phase. The sequence is that of Alpha-endosulfine (ensa) from Salmo salar (Atlantic salmon).